The sequence spans 453 residues: GTPase Der (453 aa).

EngA-type G domains follow at residues 4–169 (PIVA…SETP) and 177–352 (IKVA…RQFE). GTP is bound by residues 10–17 (GRPNVGKS), 57–61 (DTGGL), 120–123 (NKCE), 183–190 (GRPNVGKS), 230–234 (DTAGI), and 295–298 (NKWD). One can recognise a KH-like domain in the interval 353–438 (QRVTTSVINE…PIRLLWRGKK (86 aa)).

This sequence belongs to the TRAFAC class TrmE-Era-EngA-EngB-Septin-like GTPase superfamily. EngA (Der) GTPase family. As to quaternary structure, associates with the 50S ribosomal subunit.

In terms of biological role, GTPase that plays an essential role in the late steps of ribosome biogenesis. In Acaryochloris marina (strain MBIC 11017), this protein is GTPase Der.